The sequence spans 173 residues: Tumor necrosis factor ligand superfamily member 18 (173 aa).

Topologically, residues 1-20 (MEEMPLRESSPQRAERCKKS) are cytoplasmic. Residues 21–41 (WLLCIVALLLMLLCSLGTLIY) traverse the membrane as a helical; Signal-anchor for type II membrane protein segment. The region spanning 40 to 166 (IYTSLKPTAI…TNTYWGIILM (127 aa)) is the THD domain. Topologically, residues 42 to 173 (TSLKPTAIES…ILMPDLPFIS (132 aa)) are extracellular. Cysteines 52 and 72 form a disulfide. N-linked (GlcNAc...) asparagine glycosylation is present at Asn74.

This sequence belongs to the tumor necrosis factor family. In terms of assembly, homotrimer. Homodimer. Post-translationally, N-glycosylated. Detected in immature and mature dendritic cells and in macrophages (at protein level). Detected in spleen, lung, heart, thymus, monocytes, macrophages, B-cells and dendritic cells.

It localises to the cell membrane. Its function is as follows. Cytokine that binds to TNFRSF18/AITR/GITR. Regulates T-cell responses. Can function as costimulator and lower the threshold for T-cell activation and T-cell proliferation. Important for interactions between activated T-lymphocytes and endothelial cells. Mediates activation of NF-kappa-B. Triggers increased phosphorylation of STAT1 and up-regulates expression of VCAM1 and ICAM1. Promotes leukocyte adhesion to endothelial cells. Regulates migration of monocytes from the splenic reservoir to sites of inflammation. This is Tumor necrosis factor ligand superfamily member 18 (Tnfsf18) from Mus musculus (Mouse).